Reading from the N-terminus, the 502-residue chain is Glycerate kinase (502 aa).

This sequence belongs to the glycerate kinase type-2 family.

The protein resides in the cytoplasm. It catalyses the reaction (R)-glycerate + ATP = (2R)-3-phosphoglycerate + ADP + H(+). The sequence is that of Glycerate kinase (glyctk) from Danio rerio (Zebrafish).